Here is a 346-residue protein sequence, read N- to C-terminus: Heat-inducible transcription repressor HrcA (346 aa).

Belongs to the HrcA family.

Its function is as follows. Negative regulator of class I heat shock genes (grpE-dnaK-dnaJ and groELS operons). Prevents heat-shock induction of these operons. This chain is Heat-inducible transcription repressor HrcA, found in Pediococcus pentosaceus (strain ATCC 25745 / CCUG 21536 / LMG 10740 / 183-1w).